The primary structure comprises 120 residues: Seripauperin-4 (120 aa).

Residues 7–24 (IAAGVAAIAATASATTTI) form a helical membrane-spanning segment.

The protein belongs to the SRP1/TIP1 family. Seripauperin subfamily.

The protein localises to the membrane. This Saccharomyces cerevisiae (strain ATCC 204508 / S288c) (Baker's yeast) protein is Seripauperin-4 (PAU4).